Reading from the N-terminus, the 147-residue chain is Large ribosomal subunit protein uL13 (147 aa).

The protein belongs to the universal ribosomal protein uL13 family. As to quaternary structure, part of the 50S ribosomal subunit.

Its function is as follows. This protein is one of the early assembly proteins of the 50S ribosomal subunit, although it is not seen to bind rRNA by itself. It is important during the early stages of 50S assembly. The protein is Large ribosomal subunit protein uL13 of Corynebacterium glutamicum (strain R).